Here is a 321-residue protein sequence, read N- to C-terminus: tRNA U34 carboxymethyltransferase (321 aa).

Carboxy-S-adenosyl-L-methionine contacts are provided by residues lysine 90, tryptophan 104, lysine 109, glycine 129, 151-153, 180-181, methionine 195, tyrosine 199, and arginine 314; these read DPT and IE.

Belongs to the class I-like SAM-binding methyltransferase superfamily. CmoB family. Homotetramer.

The enzyme catalyses carboxy-S-adenosyl-L-methionine + 5-hydroxyuridine(34) in tRNA = 5-carboxymethoxyuridine(34) in tRNA + S-adenosyl-L-homocysteine + H(+). In terms of biological role, catalyzes carboxymethyl transfer from carboxy-S-adenosyl-L-methionine (Cx-SAM) to 5-hydroxyuridine (ho5U) to form 5-carboxymethoxyuridine (cmo5U) at position 34 in tRNAs. The polypeptide is tRNA U34 carboxymethyltransferase (Mannheimia succiniciproducens (strain KCTC 0769BP / MBEL55E)).